Here is a 232-residue protein sequence, read N- to C-terminus: Fibrillarin-like rRNA/tRNA 2'-O-methyltransferase (232 aa).

S-adenosyl-L-methionine-binding positions include 89–90 (TT), 108–109 (EF), 133–134 (DA), and 153–156 (DIAQ).

The protein belongs to the methyltransferase superfamily. Fibrillarin family. Interacts with nop5. Component of box C/D small ribonucleoprotein (sRNP) particles that contain rpl7ae, FlpA and nop5, plus a guide RNA.

Its function is as follows. Involved in pre-rRNA and tRNA processing. Utilizes the methyl donor S-adenosyl-L-methionine to catalyze the site-specific 2'-hydroxyl methylation of ribose moieties in rRNA and tRNA. Site specificity is provided by a guide RNA that base pairs with the substrate. Methylation occurs at a characteristic distance from the sequence involved in base pairing with the guide RNA. This is Fibrillarin-like rRNA/tRNA 2'-O-methyltransferase from Methanopyrus kandleri (strain AV19 / DSM 6324 / JCM 9639 / NBRC 100938).